The following is a 141-amino-acid chain: Galactose-6-phosphate isomerase subunit LacA 1 (141 aa).

This sequence belongs to the LacAB/RpiB family. Heteromultimeric protein consisting of LacA and LacB.

The catalysed reaction is aldehydo-D-galactose 6-phosphate = keto-D-tagatose 6-phosphate. Its pathway is carbohydrate metabolism; D-galactose 6-phosphate degradation; D-tagatose 6-phosphate from D-galactose 6-phosphate: step 1/1. The polypeptide is Galactose-6-phosphate isomerase subunit LacA 1 (Streptococcus agalactiae serotype III (strain NEM316)).